A 131-amino-acid chain; its full sequence is Small ribosomal subunit protein uS11 (131 aa).

It belongs to the universal ribosomal protein uS11 family. In terms of assembly, part of the 30S ribosomal subunit. Interacts with proteins S7 and S18. Binds to IF-3.

Functionally, located on the platform of the 30S subunit, it bridges several disparate RNA helices of the 16S rRNA. Forms part of the Shine-Dalgarno cleft in the 70S ribosome. This chain is Small ribosomal subunit protein uS11, found in Cellvibrio japonicus (strain Ueda107) (Pseudomonas fluorescens subsp. cellulosa).